A 129-amino-acid chain; its full sequence is Sigma factor-binding protein Crl (129 aa).

The segment at 99-119 is essential for activity; sequence TQAEFHKKLVKTLRERFEISV.

This sequence belongs to the Crl family.

It is found in the cytoplasm. In terms of biological role, binds to the sigma-S subunit of RNA polymerase, activating expression of sigma-S-regulated genes. Stimulates RNA polymerase holoenzyme formation and may bind to several other sigma factors, such as sigma-70 and sigma-32. The chain is Sigma factor-binding protein Crl from Vibrio cholerae serotype O1 (strain ATCC 39541 / Classical Ogawa 395 / O395).